We begin with the raw amino-acid sequence, 235 residues long: MIYAGILAGGTGTRMGISNLPKQFLELGDRPILIHTIEKFVLEPSIEKIVVGVHGDWVSHAEDLVDKYLPLYKERIIITKGGADRNTSIKNIIEAIDAYRPLTPEDIVVTHDSVRPFITLRMIQDNIQLAQNHDAVDTVVEAVDTIVESTNGQFITDIPNRAHLYQGQTPQTFRCKDFMDLYGSLSDEEKEILTDACKIFVIKGKDVALAKGEYSNLKITTVTDLKIAKSMIEKD.

Residues 7 to 10 (LAGG), 82 to 88 (GADRNTS), and serine 113 contribute to the CTP site.

Belongs to the IspD/TarI cytidylyltransferase family. TarI subfamily.

It catalyses the reaction D-ribitol 5-phosphate + CTP + H(+) = CDP-L-ribitol + diphosphate. Its pathway is cell wall biogenesis; poly(ribitol phosphate) teichoic acid biosynthesis. Functionally, catalyzes the transfer of the cytidylyl group of CTP to D-ribitol 5-phosphate. In Streptococcus pneumoniae serotype 2 (strain D39 / NCTC 7466), this protein is Ribitol-5-phosphate cytidylyltransferase.